The sequence spans 194 residues: Prostaglandin-H2 D-isomerase (194 aa).

The N-terminal stretch at 1–24 (MAASHTLWMGLVLLGVLGVLQTRA) is a signal peptide. A Pyrrolidone carboxylic acid modification is found at Gln25. A glycan (N-linked (GlcNAc...) asparagine) is linked at Asn51. Residue Cys65 is the Nucleophile of the active site. The N-linked (GlcNAc...) asparagine glycan is linked to Asn78. Cys89 and Cys189 form a disulfide bridge.

Belongs to the calycin superfamily. Lipocalin family. As to quaternary structure, monomer. In the male reproductive system, it is expressed in the testis and epididymis, and is secreted into the seminal fluid.

Its subcellular location is the rough endoplasmic reticulum. The protein resides in the nucleus membrane. The protein localises to the golgi apparatus. It is found in the cytoplasm. It localises to the perinuclear region. Its subcellular location is the secreted. It catalyses the reaction prostaglandin H2 = prostaglandin D2. Catalyzes the conversion of PGH2 to PGD2, a prostaglandin involved in smooth muscle contraction/relaxation and a potent inhibitor of platelet aggregation. Involved in a variety of CNS functions, such as sedation, NREM sleep and PGE2-induced allodynia, and may have an anti-apoptotic role in oligodendrocytes. Binds small non-substrate lipophilic molecules, including biliverdin, bilirubin, retinal, retinoic acid and thyroid hormone, and may act as a scavenger for harmful hydrophobic molecules and as a secretory retinoid and thyroid hormone transporter. Possibly involved in development and maintenance of the blood-brain, blood-retina, blood-aqueous humor and blood-testis barrier. It is likely to play important roles in both maturation and maintenance of the central nervous system and male reproductive system. Involved in PLA2G3-dependent maturation of mast cells. PLA2G3 is secreted by immature mast cells and acts on nearby fibroblasts upstream to PTDGS to synthesize PGD2, which in turn promotes mast cell maturation and degranulation via PTGDR. This is Prostaglandin-H2 D-isomerase (PTGDS) from Equus caballus (Horse).